A 396-amino-acid chain; its full sequence is 3-amino-4-hydroxybenzoate 2-monooxygenase PtmB3 (396 aa).

FAD-binding positions include alanine 19, 38–39 (EQ), and arginine 112. The active-site Proton acceptor is tyrosine 217. Aspartate 295 lines the FAD pocket. The tract at residues 352 to 371 (RERGHEFHLPDGPQQRLRDR) is disordered.

The protein belongs to the 6-hydroxynicotinate 3-monooxygenase family. It depends on FAD as a cofactor.

The catalysed reaction is 3-amino-4-hydroxybenzoate + NADPH + O2 + H(+) = 3-amino-2,4-dihydroxybenzoate + NADP(+) + H2O. The protein operates within antibiotic biosynthesis. Functionally, part of a gene cluster involved in the biosynthesis of thioplatensimycin (thioPTM) and platensimycin (PTM), potent and selective inhibitors of bacterial and mammalian fatty acid synthases. Catalyzes the hydroxylation of 3-amino-4-hydroxybenzoate (3,4-AHBA) to 3-amino-2,4-dihydroxybenzoate (3,2,4-ADHBA). The sequence is that of 3-amino-4-hydroxybenzoate 2-monooxygenase PtmB3 from Streptomyces platensis.